We begin with the raw amino-acid sequence, 290 residues long: 33 kDa chaperonin (290 aa).

2 disulfides stabilise this stretch: Cys-236–Cys-238 and Cys-269–Cys-272.

The protein belongs to the HSP33 family. Post-translationally, under oxidizing conditions two disulfide bonds are formed involving the reactive cysteines. Under reducing conditions zinc is bound to the reactive cysteines and the protein is inactive.

It is found in the cytoplasm. Redox regulated molecular chaperone. Protects both thermally unfolding and oxidatively damaged proteins from irreversible aggregation. Plays an important role in the bacterial defense system toward oxidative stress. This Brevibacillus brevis (strain 47 / JCM 6285 / NBRC 100599) protein is 33 kDa chaperonin.